Consider the following 578-residue polypeptide: Lysine--tRNA ligase (578 aa).

The Mg(2+) site is built by Glu-414 and Glu-421.

It belongs to the class-II aminoacyl-tRNA synthetase family. As to quaternary structure, homodimer. The cofactor is Mg(2+).

The protein localises to the cytoplasm. It carries out the reaction tRNA(Lys) + L-lysine + ATP = L-lysyl-tRNA(Lys) + AMP + diphosphate. This Porphyromonas gingivalis (strain ATCC BAA-308 / W83) protein is Lysine--tRNA ligase.